Here is a 278-residue protein sequence, read N- to C-terminus: Probable endonuclease 4 (278 aa).

Residues H69, H109, E145, D179, H182, H214, D227, H229, and E259 each contribute to the Zn(2+) site.

The protein belongs to the AP endonuclease 2 family. Zn(2+) serves as cofactor.

The catalysed reaction is Endonucleolytic cleavage to 5'-phosphooligonucleotide end-products.. Endonuclease IV plays a role in DNA repair. It cleaves phosphodiester bonds at apurinic or apyrimidinic (AP) sites, generating a 3'-hydroxyl group and a 5'-terminal sugar phosphate. This is Probable endonuclease 4 from Bacteroides fragilis (strain ATCC 25285 / DSM 2151 / CCUG 4856 / JCM 11019 / LMG 10263 / NCTC 9343 / Onslow / VPI 2553 / EN-2).